The chain runs to 125 residues: Large ribosomal subunit protein bL19 (125 aa).

This sequence belongs to the bacterial ribosomal protein bL19 family.

This protein is located at the 30S-50S ribosomal subunit interface and may play a role in the structure and function of the aminoacyl-tRNA binding site. This chain is Large ribosomal subunit protein bL19, found in Wolbachia pipientis subsp. Culex pipiens (strain wPip).